We begin with the raw amino-acid sequence, 495 residues long: Glycerol kinase (495 aa).

Thr-11 is a binding site for ADP. Residues Thr-11, Thr-12, and Ser-13 each contribute to the ATP site. Residue Thr-11 coordinates sn-glycerol 3-phosphate. Residue Arg-15 coordinates ADP. Sn-glycerol 3-phosphate-binding residues include Arg-81, Glu-82, Tyr-133, and Asp-242. Arg-81, Glu-82, Tyr-133, Asp-242, and Gln-243 together coordinate glycerol. ADP is bound by residues Thr-264 and Gly-307. Residues Thr-264, Gly-307, Gln-311, and Gly-408 each coordinate ATP. ADP contacts are provided by Gly-408 and Asn-412.

This sequence belongs to the FGGY kinase family.

The enzyme catalyses glycerol + ATP = sn-glycerol 3-phosphate + ADP + H(+). Its pathway is polyol metabolism; glycerol degradation via glycerol kinase pathway; sn-glycerol 3-phosphate from glycerol: step 1/1. With respect to regulation, inhibited by fructose 1,6-bisphosphate (FBP). Key enzyme in the regulation of glycerol uptake and metabolism. Catalyzes the phosphorylation of glycerol to yield sn-glycerol 3-phosphate. This Rhodospirillum rubrum (strain ATCC 11170 / ATH 1.1.1 / DSM 467 / LMG 4362 / NCIMB 8255 / S1) protein is Glycerol kinase.